Consider the following 1057-residue polypeptide: Histone deacetylase complex subunit SAP130 (1057 aa).

The tract at residues 1–69 is disordered; it reads MSSQQFPRLG…LPPREEKQEP (69 aa). Over residues 14 to 28 the composition is skewed to polar residues; that stretch reads PGLSQPPSQIASSGS. Residues 41–54 are compositionally biased toward basic and acidic residues; the sequence is EAGRDADVGTREHV. Arg-206 bears the Omega-N-methylarginine mark. At Thr-329 the chain carries Phosphothreonine. A phosphoserine mark is found at Ser-416 and Ser-439. Disordered regions lie at residues 619–695 and 718–740; these read TTVV…KSEV and PTVA…IAAA. Polar residues predominate over residues 620-641; that stretch reads TVVQTHSQSASTNTPAQGSSPR. Lys-794 is covalently cross-linked (Glycyl lysine isopeptide (Lys-Gly) (interchain with G-Cter in SUMO2)). The segment at 827 to 873 is disordered; it reads NLSMPPSDLPPGASPRKKPRKQQHVISTEEGDMMETNSTDDEKSAAK. An interactions with SIN3A and HDAC1 region spans residues 845–1057; it reads PRKQQHVIST…VSKLKRKEKV (213 aa). The residue at position 864 (Ser-864) is a Phosphoserine. Thr-865 is subject to Phosphothreonine. Glycyl lysine isopeptide (Lys-Gly) (interchain with G-Cter in SUMO2) cross-links involve residues Lys-873 and Lys-878. Phosphoserine is present on Ser-884.

It belongs to the SAP130 family. As to quaternary structure, component of a mSin3A corepressor complex that contains SIN3A, SAP130, SUDS3/SAP45, ARID4B/SAP180, HDAC1 and HDAC2. Interacts (released by dead or dying cells) with CLEC4E. In terms of processing, acetylated. Post-translationally, sumoylated with SUMO1.

The protein localises to the nucleus. Acts as a transcriptional repressor. May function in the assembly and/or enzymatic activity of the mSin3A corepressor complex or in mediating interactions between the complex and other regulatory complexes. This Mus musculus (Mouse) protein is Histone deacetylase complex subunit SAP130 (Sap130).